The following is a 548-amino-acid chain: Acetylcholine receptor subunit alpha-type des-2 (548 aa).

An N-terminal signal peptide occupies residues 1–19 (MLIIIQSLLLATTASLCIA). At 21–239 (TPVPTQIRLV…LTLYLRRKPL (219 aa)) the chain is on the extracellular side. 3 N-linked (GlcNAc...) asparagine glycosylation sites follow: Asn52, Asn96, and Asn224. 3 consecutive transmembrane segments (helical) span residues 240-260 (FYLV…IVGF), 274-294 (VSLG…VSDQ), and 301-321 (FIPL…LGTV). Residues 422 to 460 (LIHLSPTAHQPDESISPSAPPVPSSSPLPPPLTPGPADD) form a disordered region. The segment covering 439–455 (SAPPVPSSSPLPPPLTP) has biased composition (pro residues). Residues 517–537 (FVIFVVAFLIITFGINFIGFI) traverse the membrane as a helical segment. The Cytoplasmic segment spans residues 538–548 (HWHQAGVEYGG).

This sequence belongs to the ligand-gated ion channel (TC 1.A.9) family. Acetylcholine receptor (TC 1.A.9.1) subfamily. In terms of assembly, the functional receptor is a heteromer of deg-3 and des-2. Interacts with ric-3; which is required for proper receptor folding.

The protein resides in the cell membrane. Subunit of the non-synaptic neuronal acetylcholine receptor (AChR), which may play a role in chemotaxis towards choline. After binding choline or acetylcholine, the AChR responds by an extensive change in conformation that affects all subunits and leads to opening of an ion-conducting channel across the plasma membrane. In Caenorhabditis elegans, this protein is Acetylcholine receptor subunit alpha-type des-2 (des-2).